An 881-amino-acid polypeptide reads, in one-letter code: Tyrosine-protein kinase receptor TYRO3 (881 aa).

The first 28 residues, 1 to 28 (MVNPGPPGLIAGLLLAALSLSSVDGTKA), serve as a signal peptide directing secretion. Ig-like C2-type domains lie at 29 to 114 (LGFV…KSVS) and 125 to 206 (PYFT…AIVE). Topologically, residues 29-414 (LGFVGHGYNM…QRHPHTRMSW (386 aa)) are extracellular. Residues Asn37 and Asn49 are each glycosylated (N-linked (GlcNAc...) asparagine). Cys50 and Cys103 are joined by a disulfide. An N-linked (GlcNAc...) asparagine glycan is attached at Asn143. An intrachain disulfide couples Cys146 to Cys189. Fibronectin type-III domains follow at residues 213–306 (PPFN…TKEK) and 311–401 (IPQN…SKEE). Asn216, Asn279, Asn351, and Asn365 each carry an N-linked (GlcNAc...) asparagine glycan. A helical membrane pass occupies residues 415 to 435 (VPMVLGILTALVTVVAMTLIF). Topologically, residues 436–881 (LRKGRKETRF…MQEEQVVITL (446 aa)) are cytoplasmic. The Protein kinase domain maps to 503-774 (FTLGRTLGKG…VDLKRRLEAI (272 aa)). ATP contacts are provided by residues 509–517 (LGKGEFGSV) and Lys535. The active-site Proton acceptor is the Asp640. At Tyr671 the chain carries Phosphotyrosine; by autocatalysis. The tract at residues 846–881 (EWSSSAQNGEARGLLHEEEEEEEEEEMQEEQVVITL) is disordered. The span at 862–874 (EEEEEEEEEEMQE) shows a compositional bias: acidic residues.

Belongs to the protein kinase superfamily. Tyr protein kinase family. AXL/UFO subfamily. Post-translationally, tyrosine phosphorylated upon receptor stimulation.

The protein localises to the cell membrane. It catalyses the reaction L-tyrosyl-[protein] + ATP = O-phospho-L-tyrosyl-[protein] + ADP + H(+). Its function is as follows. May be involved in cell adhesion processes, particularly in the central nervous system. The chain is Tyrosine-protein kinase receptor TYRO3 (tyro3) from Xenopus tropicalis (Western clawed frog).